Here is a 117-residue protein sequence, read N- to C-terminus: Transcription elongation factor A protein-like 8 (117 aa).

Composition is skewed to basic and acidic residues over residues 1–24 and 61–74; these read MQKS…DRPL and YKED…DPEE. Positions 1-74 are disordered; sequence MQKSCGENER…SPVRHLDPEE (74 aa). A coiled-coil region spans residues 73–100; the sequence is EEMIRGADELERLREEIRRVRNKFVMMH.

The protein belongs to the TFS-II family. TFA subfamily.

It is found in the nucleus. Functionally, may be involved in transcriptional regulation. This chain is Transcription elongation factor A protein-like 8 (TCEAL8), found in Bos taurus (Bovine).